A 278-amino-acid polypeptide reads, in one-letter code: Large ribosomal subunit protein uL2 (278 aa).

Positions 222 to 264 (GVAMNPIDHPHGGGEGRTSGGRHPVTPWGKPTKGRKTRKNKAT) are disordered.

This sequence belongs to the universal ribosomal protein uL2 family. In terms of assembly, part of the 50S ribosomal subunit. Forms a bridge to the 30S subunit in the 70S ribosome.

Functionally, one of the primary rRNA binding proteins. Required for association of the 30S and 50S subunits to form the 70S ribosome, for tRNA binding and peptide bond formation. It has been suggested to have peptidyltransferase activity; this is somewhat controversial. Makes several contacts with the 16S rRNA in the 70S ribosome. The chain is Large ribosomal subunit protein uL2 from Phenylobacterium zucineum (strain HLK1).